The chain runs to 231 residues: Phosphatidylserine decarboxylase proenzyme (231 aa).

Ser-200 functions as the Schiff-base intermediate with substrate; via pyruvic acid in the catalytic mechanism. At Ser-200 the chain carries Pyruvic acid (Ser); by autocatalysis.

The protein belongs to the phosphatidylserine decarboxylase family. PSD-A subfamily. In terms of assembly, heterodimer of a large membrane-associated beta subunit and a small pyruvoyl-containing alpha subunit. Requires pyruvate as cofactor. In terms of processing, is synthesized initially as an inactive proenzyme. Formation of the active enzyme involves a self-maturation process in which the active site pyruvoyl group is generated from an internal serine residue via an autocatalytic post-translational modification. Two non-identical subunits are generated from the proenzyme in this reaction, and the pyruvate is formed at the N-terminus of the alpha chain, which is derived from the carboxyl end of the proenzyme. The post-translation cleavage follows an unusual pathway, termed non-hydrolytic serinolysis, in which the side chain hydroxyl group of the serine supplies its oxygen atom to form the C-terminus of the beta chain, while the remainder of the serine residue undergoes an oxidative deamination to produce ammonia and the pyruvoyl prosthetic group on the alpha chain.

It is found in the cell membrane. It catalyses the reaction a 1,2-diacyl-sn-glycero-3-phospho-L-serine + H(+) = a 1,2-diacyl-sn-glycero-3-phosphoethanolamine + CO2. It functions in the pathway phospholipid metabolism; phosphatidylethanolamine biosynthesis; phosphatidylethanolamine from CDP-diacylglycerol: step 2/2. Catalyzes the formation of phosphatidylethanolamine (PtdEtn) from phosphatidylserine (PtdSer). In Mycobacterium tuberculosis (strain ATCC 25177 / H37Ra), this protein is Phosphatidylserine decarboxylase proenzyme.